The chain runs to 350 residues: Sulfate-binding protein (350 aa).

A signal peptide spans 1-40; that stretch reads MKTAWTRRSFLQSAALATATVITIAACGGNNQSSSGGSGQ.

Belongs to the prokaryotic sulfate-binding protein family.

The protein localises to the periplasm. In terms of biological role, this protein specifically binds sulfate and is involved in its transmembrane transport. In Synechococcus elongatus (strain ATCC 33912 / PCC 7942 / FACHB-805) (Anacystis nidulans R2), this protein is Sulfate-binding protein (sbpA).